Here is a 452-residue protein sequence, read N- to C-terminus: MSRSRSAIILAAGQGTRMKSKTVKVLHKVAGRPMLDWAVALAGDCGASDIVTVWGAHSPAVRDAAEALGTRTALQDPPKGTGHAVLAARAALADLSGDAIVLYADTPLITAATVARVFEALEGGASVAVLGFEPDDPAAYGRLITNEAGDLDRIVEFKDASEAERAVGLVNSGVLAAPAELLFDLLGEVGNDNANGEYYLTDVVGLARARDLRAAVVVADADEVLGVNSRADLAEAEAAFQSRMRQSMMADGVTLIAPETVFFAHDTQIARDVVIEPNVVFGPGVVIEEDVVVHAHSHIAGAHLKRGAHAGPFARLRPGAELGEGSKVGNFVEIKKSQLAEGAKVSHLTYIGDASVGANANIGAGTITCNYDGYDKHRTVIGDNAFIGSNTCLVAPVTVGDGAFTATGTIVTQDVPADALALARTPQTHKPGWAARFNAAKQARKARKDSQT.

Residues 1-230 (MSRSRSAIIL…ADEVLGVNSR (230 aa)) are pyrophosphorylase. UDP-N-acetyl-alpha-D-glucosamine is bound by residues 10–13 (LAAG), Lys24, Gln75, and 80–81 (GT). Position 105 (Asp105) interacts with Mg(2+). 4 residues coordinate UDP-N-acetyl-alpha-D-glucosamine: Gly141, Glu156, Asn171, and Asn228. Residue Asn228 coordinates Mg(2+). Residues 231-251 (ADLAEAEAAFQSRMRQSMMAD) are linker. Residues 252 to 452 (GVTLIAPETV…ARKARKDSQT (201 aa)) are N-acetyltransferase. 2 residues coordinate UDP-N-acetyl-alpha-D-glucosamine: Arg317 and Lys335. The Proton acceptor role is filled by His347. UDP-N-acetyl-alpha-D-glucosamine is bound by residues Tyr350 and Asn361. Residues Ala364, 370-371 (NY), Ser389, Thr407, and Arg424 contribute to the acetyl-CoA site.

It in the N-terminal section; belongs to the N-acetylglucosamine-1-phosphate uridyltransferase family. The protein in the C-terminal section; belongs to the transferase hexapeptide repeat family. Homotrimer. Requires Mg(2+) as cofactor.

It localises to the cytoplasm. It catalyses the reaction alpha-D-glucosamine 1-phosphate + acetyl-CoA = N-acetyl-alpha-D-glucosamine 1-phosphate + CoA + H(+). It carries out the reaction N-acetyl-alpha-D-glucosamine 1-phosphate + UTP + H(+) = UDP-N-acetyl-alpha-D-glucosamine + diphosphate. The protein operates within nucleotide-sugar biosynthesis; UDP-N-acetyl-alpha-D-glucosamine biosynthesis; N-acetyl-alpha-D-glucosamine 1-phosphate from alpha-D-glucosamine 6-phosphate (route II): step 2/2. It participates in nucleotide-sugar biosynthesis; UDP-N-acetyl-alpha-D-glucosamine biosynthesis; UDP-N-acetyl-alpha-D-glucosamine from N-acetyl-alpha-D-glucosamine 1-phosphate: step 1/1. Its pathway is bacterial outer membrane biogenesis; LPS lipid A biosynthesis. Catalyzes the last two sequential reactions in the de novo biosynthetic pathway for UDP-N-acetylglucosamine (UDP-GlcNAc). The C-terminal domain catalyzes the transfer of acetyl group from acetyl coenzyme A to glucosamine-1-phosphate (GlcN-1-P) to produce N-acetylglucosamine-1-phosphate (GlcNAc-1-P), which is converted into UDP-GlcNAc by the transfer of uridine 5-monophosphate (from uridine 5-triphosphate), a reaction catalyzed by the N-terminal domain. The polypeptide is Bifunctional protein GlmU (Maricaulis maris (strain MCS10) (Caulobacter maris)).